We begin with the raw amino-acid sequence, 779 residues long: ATP-dependent RNA helicase SUPV3L1, mitochondrial (779 aa).

The N-terminal 40 residues, 1-40 (MSLPRCTLLWARLPAGRGAGPRAAPCSALRALVGSFPGAS), are a transit peptide targeting the mitochondrion. Lys99 is subject to N6-acetyllysine. The Helicase ATP-binding domain maps to 194–334 (EARARQRKII…AINLVSELLY (141 aa)). Residue 207–214 (GPTNSGKT) coordinates ATP. Residues 353–521 (VLDHALESLD…PTAEQIEMFA (169 aa)) enclose the Helicase C-terminal domain. The interaction with LAMTOR5, important for protein stability stretch occupies residues 650–779 (PDSSLVRSLQ…RRKKKDPDSD (130 aa)). Residues 693 to 703 (SGDQSRLSGAS) show a composition bias toward polar residues. 2 disordered regions span residues 693–732 (SGDQ…KELP) and 754–779 (EWLT…PDSD). Residue Ser725 is modified to Phosphoserine. Positions 761–779 (EHSREKVGTRRKKKDPDSD) are enriched in basic and acidic residues.

It belongs to the helicase family. As to quaternary structure, homodimer; in free form. Component of the mitochondrial degradosome (mtEXO) complex which is a heteropentamer containing 2 copies of SUPV3L1 and 3 copies of PNPT1. As part of mitochondrial degradosome complex, interacts with GRSF1 in a RNA-dependent manner; the interaction enhances the activity of the complex. Interacts with LAMTOR5/HBXIP, WRN and BLM. The cofactor is Mg(2+). It depends on Mn(2+) as a cofactor.

Its subcellular location is the nucleus. The protein localises to the mitochondrion matrix. It localises to the mitochondrion nucleoid. The enzyme catalyses ATP + H2O = ADP + phosphate + H(+). Helicase activity toward DNA substrate is inhibited by micromolar concentrations of 5,6-dichloro-1-(beta-D-ribofuranosyl)benzotriazole (DRBT) and 4,5,6,7-tetrabromobenzotriazole (TBBT). Helicase activity toward RNA substrate is inhibited by elevated concentrations of TBBT. Inhibited by some ring-expanded nucleoside analogs. Major helicase player in mitochondrial RNA metabolism. Component of the mitochondrial degradosome (mtEXO) complex, that degrades 3' overhang double-stranded RNA with a 3'-to-5' directionality in an ATP-dependent manner. Involved in the degradation of non-coding mitochondrial transcripts (MT-ncRNA) and tRNA-like molecules. ATPase and ATP-dependent multisubstrate helicase, able to unwind double-stranded (ds) DNA and RNA, and RNA/DNA heteroduplexes in the 5'-to-3' direction. Plays a role in the RNA surveillance system in mitochondria; regulates the stability of mature mRNAs, the removal of aberrantly formed mRNAs and the rapid degradation of non coding processing intermediates. Also implicated in recombination and chromatin maintenance pathways. May protect cells from apoptosis. Associates with mitochondrial DNA. The sequence is that of ATP-dependent RNA helicase SUPV3L1, mitochondrial (Supv3l1) from Mus musculus (Mouse).